The following is a 473-amino-acid chain: Photosystem II CP43 reaction center protein (473 aa).

The propeptide occupies 1 to 14; that stretch reads MKNLYSLRRFYHVE. Residue T15 is modified to N-acetylthreonine. Phosphothreonine is present on T15. 5 helical membrane-spanning segments follow: residues 69-93, 134-155, 178-200, 255-275, and 291-312; these read LFEVAHFVPEKPMYEQGLILLPHLA, LIGPETLEESFPFFGYVWKDKN, KARYLGGVYDTWAPGGGDVRVIT, KPFGWARRAFVWSGEAYLSYS, and WFNNTVYPSEFYGPTGPEASQA. E367 is a binding site for [CaMn4O5] cluster. The chain crosses the membrane as a helical span at residues 447–471; sequence RARAAAAGFEKGIDRDTEPTLFMRP.

This sequence belongs to the PsbB/PsbC family. PsbC subfamily. PSII is composed of 1 copy each of membrane proteins PsbA, PsbB, PsbC, PsbD, PsbE, PsbF, PsbH, PsbI, PsbJ, PsbK, PsbL, PsbM, PsbT, PsbX, PsbY, PsbZ, Psb30/Ycf12, at least 3 peripheral proteins of the oxygen-evolving complex and a large number of cofactors. It forms dimeric complexes. Binds multiple chlorophylls and provides some of the ligands for the Ca-4Mn-5O cluster of the oxygen-evolving complex. It may also provide a ligand for a Cl- that is required for oxygen evolution. PSII binds additional chlorophylls, carotenoids and specific lipids. is required as a cofactor.

It is found in the plastid. The protein resides in the chloroplast thylakoid membrane. One of the components of the core complex of photosystem II (PSII). It binds chlorophyll and helps catalyze the primary light-induced photochemical processes of PSII. PSII is a light-driven water:plastoquinone oxidoreductase, using light energy to abstract electrons from H(2)O, generating O(2) and a proton gradient subsequently used for ATP formation. The polypeptide is Photosystem II CP43 reaction center protein (Nephroselmis olivacea (Green alga)).